Consider the following 958-residue polypeptide: Translation initiation factor IF-2 (958 aa).

Disordered stretches follow at residues Ala67–Pro95 and Pro111–Gly355. Pro residues predominate over residues Ala75–Pro95. The segment covering Pro140–Pro161 has biased composition (low complexity). Residues Arg195–Gly206 show a composition bias toward basic and acidic residues. The span at Arg209 to Ala221 shows a compositional bias: low complexity. Over residues Pro228 to Pro241 the composition is skewed to pro residues. The span at Gly268 to Arg325 shows a compositional bias: gly residues. The segment covering Gly326–Lys335 has biased composition (basic residues). The 172-residue stretch at Ala450–Leu621 folds into the tr-type G domain. Positions Gly459 to Thr466 are G1. Gly459–Thr466 lines the GTP pocket. Positions Gly484–His488 are G2. Residues Asp509–Gly512 form a G3 region. GTP is bound by residues Asp509–His513 and Asn563–Asp566. The interval Asn563–Asp566 is G4. The G5 stretch occupies residues Ser599 to Arg601.

This sequence belongs to the TRAFAC class translation factor GTPase superfamily. Classic translation factor GTPase family. IF-2 subfamily.

The protein resides in the cytoplasm. In terms of biological role, one of the essential components for the initiation of protein synthesis. Protects formylmethionyl-tRNA from spontaneous hydrolysis and promotes its binding to the 30S ribosomal subunits. Also involved in the hydrolysis of GTP during the formation of the 70S ribosomal complex. The sequence is that of Translation initiation factor IF-2 from Paenarthrobacter aurescens (strain TC1).